The chain runs to 485 residues: Aspartyl/glutamyl-tRNA(Asn/Gln) amidotransferase subunit B (485 aa).

It belongs to the GatB/GatE family. GatB subfamily. In terms of assembly, heterotrimer of A, B and C subunits.

It catalyses the reaction L-glutamyl-tRNA(Gln) + L-glutamine + ATP + H2O = L-glutaminyl-tRNA(Gln) + L-glutamate + ADP + phosphate + H(+). The enzyme catalyses L-aspartyl-tRNA(Asn) + L-glutamine + ATP + H2O = L-asparaginyl-tRNA(Asn) + L-glutamate + ADP + phosphate + 2 H(+). Functionally, allows the formation of correctly charged Asn-tRNA(Asn) or Gln-tRNA(Gln) through the transamidation of misacylated Asp-tRNA(Asn) or Glu-tRNA(Gln) in organisms which lack either or both of asparaginyl-tRNA or glutaminyl-tRNA synthetases. The reaction takes place in the presence of glutamine and ATP through an activated phospho-Asp-tRNA(Asn) or phospho-Glu-tRNA(Gln). The protein is Aspartyl/glutamyl-tRNA(Asn/Gln) amidotransferase subunit B of Bordetella avium (strain 197N).